We begin with the raw amino-acid sequence, 1386 residues long: DNA-directed RNA polymerase subunit beta' (1386 aa).

4 residues coordinate Zn(2+): Cys-75, Cys-77, Cys-90, and Cys-93. 3 residues coordinate Mg(2+): Asp-466, Asp-468, and Asp-470. 4 residues coordinate Zn(2+): Cys-809, Cys-883, Cys-890, and Cys-893.

The protein belongs to the RNA polymerase beta' chain family. In terms of assembly, the RNAP catalytic core consists of 2 alpha, 1 beta, 1 beta' and 1 omega subunit. When a sigma factor is associated with the core the holoenzyme is formed, which can initiate transcription. Requires Mg(2+) as cofactor. Zn(2+) serves as cofactor.

It carries out the reaction RNA(n) + a ribonucleoside 5'-triphosphate = RNA(n+1) + diphosphate. Functionally, DNA-dependent RNA polymerase catalyzes the transcription of DNA into RNA using the four ribonucleoside triphosphates as substrates. This is DNA-directed RNA polymerase subunit beta' from Oleidesulfovibrio alaskensis (strain ATCC BAA-1058 / DSM 17464 / G20) (Desulfovibrio alaskensis).